Here is a 359-residue protein sequence, read N- to C-terminus: 3-dehydroquinate synthase (359 aa).

NAD(+) contacts are provided by residues 105-109 (GVVGD), 129-130 (TT), Lys142, Lys151, and 169-172 (TIKT). Zn(2+)-binding residues include Glu184, His247, and His263.

Belongs to the sugar phosphate cyclases superfamily. Dehydroquinate synthase family. Co(2+) is required as a cofactor. Requires Zn(2+) as cofactor. It depends on NAD(+) as a cofactor.

It is found in the cytoplasm. The enzyme catalyses 7-phospho-2-dehydro-3-deoxy-D-arabino-heptonate = 3-dehydroquinate + phosphate. It functions in the pathway metabolic intermediate biosynthesis; chorismate biosynthesis; chorismate from D-erythrose 4-phosphate and phosphoenolpyruvate: step 2/7. Its function is as follows. Catalyzes the conversion of 3-deoxy-D-arabino-heptulosonate 7-phosphate (DAHP) to dehydroquinate (DHQ). The protein is 3-dehydroquinate synthase of Ruminiclostridium cellulolyticum (strain ATCC 35319 / DSM 5812 / JCM 6584 / H10) (Clostridium cellulolyticum).